The following is a 153-amino-acid chain: Calmodulin-like protein 4 (153 aa).

EF-hand domains follow at residues 8-43 (DQINEYKECFSLYDKQQRGKIKATDLLVSMRCLGAS), 44-79 (PTPGEVQRHLQTHGIDKNGELDFSTFLTIMHMQIKQ), 81-116 (DPKKEILLAMLMADKEKKGYIMASELRSKLMKLGEK), and 117-152 (LTHKEVDDLFKEAGIEPNGQVKYDTFIQRITIPVRD).

This sequence belongs to the calmodulin family. As to quaternary structure, interacts with MYO7B; the interaction mediates the association of CALML4 with the IMAC/intermicrovillar adhesion complex. Interacts with MYO7A. Expressed in the small intestine, in both mature enterocytes on the villus surface and immature cells that reside in the crypt stem-cell niche.

It is found in the cell projection. The protein resides in the microvillus. As part of the intermicrovillar adhesion complex/IMAC plays a role in epithelial brush border differentiation, controlling microvilli organization and length. Acts as a light chain for MYO7B and is required for efficient targeting of the IMAC to the tips of border brush microvilli. This chain is Calmodulin-like protein 4 (Calml4), found in Mus musculus (Mouse).